The chain runs to 360 residues: Peptide chain release factor 1 (360 aa).

N5-methylglutamine is present on Q235.

It belongs to the prokaryotic/mitochondrial release factor family. Post-translationally, methylated by PrmC. Methylation increases the termination efficiency of RF1.

It localises to the cytoplasm. In terms of biological role, peptide chain release factor 1 directs the termination of translation in response to the peptide chain termination codons UAG and UAA. This chain is Peptide chain release factor 1, found in Paracidovorax citrulli (strain AAC00-1) (Acidovorax citrulli).